Here is a 370-residue protein sequence, read N- to C-terminus: Tyrosyl-DNA phosphodiesterase 2 (370 aa).

Position 1 is an N-acetylmethionine (Met1). The segment at 1-32 (MASGSSSDAAEPAGPAGRAASAPEAAQAEEDR) is disordered. The segment covering 9–26 (AAEPAGPAGRAASAPEAA) has biased composition (low complexity). A Glycyl lysine isopeptide (Lys-Gly) (interchain with G-Cter in SUMO2) cross-link involves residue Lys34. Residue Thr99 is modified to Phosphothreonine; by ACVR1B. Residues 130–134 (NIDGL) are interaction with 5' end of substrate DNA. Asp132 and Glu162 together coordinate Mg(2+). The segment at 236-241 (HLESTR) is interaction with 5' end of substrate DNA. The active-site Proton donor/acceptor is the Asp272. Interaction with 5' end of substrate DNA stretches follow at residues 274–276 (NLR) and 315–321 (LRIPAAY).

This sequence belongs to the CCR4/nocturin family. In terms of assembly, interacts with TRAF2, TRAF3, TRAF5, TRAF6, TNFRSF8/CD30, TNFRSF5/CD40, TNFRSF1B/TNF-R75, ETS1, ETS2, FLI1, SMAD3 and ACVR1B/ALK4. Mg(2+) serves as cofactor. Requires Mn(2+) as cofactor. In terms of processing, ubiquitinated by TRAF6. Widely expressed. Expressed in whole brain, cerebellum, quiescent cortical astrocytes and cerebellar granule neurons.

The protein resides in the nucleus. It is found in the PML body. The protein localises to the nucleolus. Its subcellular location is the cytoplasm. Its function is as follows. DNA repair enzyme that can remove a variety of covalent adducts from DNA through hydrolysis of a 5'-phosphodiester bond, giving rise to DNA with a free 5' phosphate. Catalyzes the hydrolysis of dead-end complexes between DNA and the topoisomerase 2 (TOP2) active site tyrosine residue. The 5'-tyrosyl DNA phosphodiesterase activity can enable the repair of TOP2-induced DNA double-strand breaks/DSBs without the need for nuclease activity, creating a 'clean' DSB with 5'-phosphate termini that are ready for ligation. Thereby, protects the transcription of many genes involved in neurological development and maintenance from the abortive activity of TOP2. Hydrolyzes 5'-phosphoglycolates on protruding 5' ends on DSBs due to DNA damage by radiation and free radicals. Has preference for single-stranded DNA or duplex DNA with a 4 base pair overhang as substrate. Also has 3'-tyrosyl DNA phosphodiesterase activity, but less efficiently and much slower than TDP1. Constitutes the major if not only 5'-tyrosyl-DNA phosphodiesterase in cells. Also acts as an adapter by participating in the specific activation of MAP3K7/TAK1 in response to TGF-beta: associates with components of the TGF-beta receptor-TRAF6-TAK1 signaling module and promotes their ubiquitination dependent complex formation. Involved in non-canonical TGF-beta induced signaling routes. May also act as a negative regulator of ETS1 and may inhibit NF-kappa-B activation. Acts as a regulator of ribosome biogenesis following stress. The sequence is that of Tyrosyl-DNA phosphodiesterase 2 (Tdp2) from Mus musculus (Mouse).